The chain runs to 216 residues: Transmembrane protein 186 (216 aa).

Residues methionine 1–isoleucine 68 lie on the Mitochondrial matrix side of the membrane. Residues glycine 31–glutamate 52 form a disordered region. A helical transmembrane segment spans residues glycine 69 to tyrosine 91. Residues cysteine 92–leucine 103 lie on the Mitochondrial intermembrane side of the membrane. Residues cysteine 104 to phenylalanine 124 traverse the membrane as a helical segment. The Mitochondrial matrix portion of the chain corresponds to arginine 125–lysine 216.

The protein belongs to the TMEM186 family. As to quaternary structure, part of the mitochondrial complex I assembly/MCIA complex that comprises at least the core subunits TMEM126B, NDUFAF1, ECSIT and ACAD9 and complement subunits such as COA1 and TMEM186. Interacts with MT-ND3.

It is found in the mitochondrion inner membrane. Its function is as follows. As part of the MCIA complex, required for efficient assembly of the mitochondrial complex I. This is Transmembrane protein 186 from Mus musculus (Mouse).